A 536-amino-acid polypeptide reads, in one-letter code: Octopamine receptor beta-2R (536 aa).

The segment at methionine 1–arginine 26 is disordered. Residues methionine 1 to alanine 157 lie on the Extracellular side of the membrane. The segment covering glutamine 14–arginine 26 has biased composition (basic residues). N-linked (GlcNAc...) asparagine glycans are attached at residues asparagine 18, asparagine 92, asparagine 113, and asparagine 126. Residues phenylalanine 158–valine 178 form a helical membrane-spanning segment. At methionine 179–tyrosine 190 the chain is on the cytoplasmic side. The chain crosses the membrane as a helical span at residues phenylalanine 191 to phenylalanine 211. The Extracellular portion of the chain corresponds to serine 212–aspartate 233. A helical membrane pass occupies residues valine 234 to valine 256. Residues lysine 257–valine 270 lie on the Cytoplasmic side of the membrane. The chain crosses the membrane as a helical span at residues glycine 271–isoleucine 291. Over glycine 292–valine 320 the chain is Extracellular. The helical transmembrane segment at isoleucine 321–isoleucine 341 threads the bilayer. The Cytoplasmic segment spans residues phenylalanine 342 to threonine 412. A helical membrane pass occupies residues leucine 413–leucine 433. At serine 434 to aspartate 444 the chain is on the extracellular side. Residues isoleucine 445–tyrosine 465 traverse the membrane as a helical segment. Residues alanine 466 to leucine 536 are Cytoplasmic-facing.

Belongs to the G-protein coupled receptor 1 family. In the adult, expressed in the superior protocerebrum and the optic lobe medulla of the central nervous system, nurse cells of egg chambers in the ovary at oogenic stages 1-10, and spermatogonia and spermatocytes in the testis. Expressed in the oviduct epithelium. Also expressed in the spermatheca. Expressed in embryonic and larval ventral nerve cord and brain lobe, embryonic and larval salivary glands and larval imaginal disk and midgut. Also expressed in larval synaptic boutons.

Its subcellular location is the cell membrane. Functionally, autoreceptor for octopamine (OA), which is a neurotransmitter, neurohormone, and neuromodulator in invertebrates. Essential for ovulation and fertilization. During ovulation it mediates the OA-induced relaxation of the oviduct visceral muscles, by increasing cAMP levels and activating effectors such as calmodulin-dependent kinase II (CaMKII) and cAMP-dependent protein kinase A (PKA) pathways. Positively regulates synaptic growth; an action that is antagonized by Octbeta1R. This chain is Octopamine receptor beta-2R, found in Drosophila melanogaster (Fruit fly).